A 253-amino-acid polypeptide reads, in one-letter code: MGQCGITSSKTVLVFLNLIFWGAAGILCYVGAYVFITYDDYDHFFEDVYTLFPAVVIIAVGALLFIIGLIGCCATIRESRCGLATFVFILLLVFVTEVVVVVLGYVYRAKVENEVDRSIQKVYKTYNGTNSDAASRAIDYVQRQLHCCGIHNYSDWENTDWFKETKNQSVPLSCCRETAKSCNGSLANPSDLYAEGCEALVVKKLQEILMHVIWAALAFAAIQLLGMLCACIVLCRRSRDPAYELLITGGTYA.

Topologically, residues 1–11 (MGQCGITSSKT) are cytoplasmic. A helical membrane pass occupies residues 12–32 (VLVFLNLIFWGAAGILCYVGA). At 33–50 (YVFITYDDYDHFFEDVYT) the chain is on the extracellular side. Residues 51 to 71 (LFPAVVIIAVGALLFIIGLIG) form a helical membrane-spanning segment. At 72 to 85 (CCATIRESRCGLAT) the chain is on the cytoplasmic side. A helical transmembrane segment spans residues 86–106 (FVFILLLVFVTEVVVVVLGYV). Residues 107-212 (YRAKVENEVD…KKLQEILMHV (106 aa)) are Extracellular-facing. 4 N-linked (GlcNAc...) asparagine glycosylation sites follow: asparagine 127, asparagine 152, asparagine 167, and asparagine 183. A helical membrane pass occupies residues 213 to 233 (IWAALAFAAIQLLGMLCACIV). Over 234–253 (LCRRSRDPAYELLITGGTYA) the chain is Cytoplasmic.

Belongs to the tetraspanin (TM4SF) family. In terms of assembly, interacts with claudin-11/CLDN11 and integrins.

The protein localises to the membrane. Regulates the proliferation and migration of oligodendrocytes, a process essential for normal myelination and repair. This is Tetraspanin-3 (Tspan3) from Mus musculus (Mouse).